A 473-amino-acid chain; its full sequence is Photosystem II CP43 reaction center protein (473 aa).

Residues 1-14 (MKTLYSLRRFYHVE) constitute a propeptide that is removed on maturation. Thr-15 is modified (N-acetylthreonine). Position 15 is a phosphothreonine (Thr-15). A run of 5 helical transmembrane segments spans residues 69-93 (LFEV…PHLA), 134-155 (LLGP…KDRN), 178-200 (KALY…RKIT), 255-275 (KPFA…LSYS), and 291-312 (WFNN…ASQA). Glu-367 contacts [CaMn4O5] cluster. A helical transmembrane segment spans residues 447–471 (RARAAAAGFEKGIDRDFEPVLSMTP).

It belongs to the PsbB/PsbC family. PsbC subfamily. In terms of assembly, PSII is composed of 1 copy each of membrane proteins PsbA, PsbB, PsbC, PsbD, PsbE, PsbF, PsbH, PsbI, PsbJ, PsbK, PsbL, PsbM, PsbT, PsbX, PsbY, PsbZ, Psb30/Ycf12, at least 3 peripheral proteins of the oxygen-evolving complex and a large number of cofactors. It forms dimeric complexes. Binds multiple chlorophylls and provides some of the ligands for the Ca-4Mn-5O cluster of the oxygen-evolving complex. It may also provide a ligand for a Cl- that is required for oxygen evolution. PSII binds additional chlorophylls, carotenoids and specific lipids. is required as a cofactor.

It is found in the plastid. The protein localises to the chloroplast thylakoid membrane. Functionally, one of the components of the core complex of photosystem II (PSII). It binds chlorophyll and helps catalyze the primary light-induced photochemical processes of PSII. PSII is a light-driven water:plastoquinone oxidoreductase, using light energy to abstract electrons from H(2)O, generating O(2) and a proton gradient subsequently used for ATP formation. The sequence is that of Photosystem II CP43 reaction center protein from Coffea arabica (Arabian coffee).